The sequence spans 95 residues: Pyrimidine/purine nucleoside phosphorylase (95 aa).

This sequence belongs to the nucleoside phosphorylase PpnP family.

It catalyses the reaction a purine D-ribonucleoside + phosphate = a purine nucleobase + alpha-D-ribose 1-phosphate. The enzyme catalyses adenosine + phosphate = alpha-D-ribose 1-phosphate + adenine. It carries out the reaction cytidine + phosphate = cytosine + alpha-D-ribose 1-phosphate. The catalysed reaction is guanosine + phosphate = alpha-D-ribose 1-phosphate + guanine. It catalyses the reaction inosine + phosphate = alpha-D-ribose 1-phosphate + hypoxanthine. The enzyme catalyses thymidine + phosphate = 2-deoxy-alpha-D-ribose 1-phosphate + thymine. It carries out the reaction uridine + phosphate = alpha-D-ribose 1-phosphate + uracil. The catalysed reaction is xanthosine + phosphate = alpha-D-ribose 1-phosphate + xanthine. Catalyzes the phosphorolysis of diverse nucleosides, yielding D-ribose 1-phosphate and the respective free bases. Can use uridine, adenosine, guanosine, cytidine, thymidine, inosine and xanthosine as substrates. Also catalyzes the reverse reactions. The chain is Pyrimidine/purine nucleoside phosphorylase from Edwardsiella ictaluri (strain 93-146).